The following is a 71-amino-acid chain: Ceratotoxin-A (71 aa).

Positions Met1–Ala23 are cleaved as a signal peptide. Propeptides lie at residues Glu24 to Arg35 and Val65 to Gly71.

Homomer of four to six subunits.

The protein resides in the secreted. In terms of biological role, female-specific peptides with potent activity against Gram-positive and Gram-negative bacteria. They have as well hemolytic activity. This is Ceratotoxin-A (CTXA2) from Ceratitis capitata (Mediterranean fruit fly).